Here is a 353-residue protein sequence, read N- to C-terminus: UDP-N-acetylenolpyruvoylglucosamine reductase (353 aa).

The 171-residue stretch at Leu-31–Pro-201 folds into the FAD-binding PCMH-type domain. Arg-177 is an active-site residue. The Proton donor role is filled by Ser-250. Glu-346 is a catalytic residue.

The protein belongs to the MurB family. FAD is required as a cofactor.

The protein resides in the cytoplasm. It carries out the reaction UDP-N-acetyl-alpha-D-muramate + NADP(+) = UDP-N-acetyl-3-O-(1-carboxyvinyl)-alpha-D-glucosamine + NADPH + H(+). It functions in the pathway cell wall biogenesis; peptidoglycan biosynthesis. In terms of biological role, cell wall formation. The sequence is that of UDP-N-acetylenolpyruvoylglucosamine reductase from Bordetella parapertussis (strain 12822 / ATCC BAA-587 / NCTC 13253).